Here is a 467-residue protein sequence, read N- to C-terminus: Glutamate--tRNA ligase (467 aa).

The short motif at 9–19 (PSPTGFLHIGG) is the 'HIGH' region element. A 'KMSKS' region motif is present at residues 250 to 254 (KLSKR). Residue Lys253 participates in ATP binding.

Belongs to the class-I aminoacyl-tRNA synthetase family. Glutamate--tRNA ligase type 1 subfamily. Monomer.

The protein localises to the cytoplasm. The catalysed reaction is tRNA(Glu) + L-glutamate + ATP = L-glutamyl-tRNA(Glu) + AMP + diphosphate. In terms of biological role, catalyzes the attachment of glutamate to tRNA(Glu) in a two-step reaction: glutamate is first activated by ATP to form Glu-AMP and then transferred to the acceptor end of tRNA(Glu). This Mesomycoplasma hyopneumoniae (strain 7448) (Mycoplasma hyopneumoniae) protein is Glutamate--tRNA ligase.